Reading from the N-terminus, the 417-residue chain is NADH-quinone oxidoreductase subunit D (417 aa).

Belongs to the complex I 49 kDa subunit family. NDH-1 is composed of 14 different subunits. Subunits NuoB, C, D, E, F, and G constitute the peripheral sector of the complex.

The protein localises to the cell inner membrane. The catalysed reaction is a quinone + NADH + 5 H(+)(in) = a quinol + NAD(+) + 4 H(+)(out). Its function is as follows. NDH-1 shuttles electrons from NADH, via FMN and iron-sulfur (Fe-S) centers, to quinones in the respiratory chain. The immediate electron acceptor for the enzyme in this species is believed to be ubiquinone. Couples the redox reaction to proton translocation (for every two electrons transferred, four hydrogen ions are translocated across the cytoplasmic membrane), and thus conserves the redox energy in a proton gradient. The chain is NADH-quinone oxidoreductase subunit D from Burkholderia orbicola (strain MC0-3).